The chain runs to 325 residues: Palmitoyltransferase PFA3 (325 aa).

Residues 1-8 (MHICSLIP) are Cytoplasmic-facing. A helical transmembrane segment spans residues 9–29 (ILFPKLLTCGLALYSAVVLWL). Lys-30 is a topological domain (lumenal). The chain crosses the membrane as a helical span at residues 31–51 (VSVIGSFIQGTVLLTLVPLIL). At 52-147 (YAYFSTIAVG…PGCIGYNNHK (96 aa)) the chain is on the cytoplasmic side. One can recognise a DHHC domain in the interval 104–154 (RYCVKCKVWKPDRCHHCSACDKCYLRRDHHCVWFPGCIGYNNHKFFLHFLL). A helical membrane pass occupies residues 148 to 168 (FFLHFLLYASVYAFWICIITT). The Lumenal segment spans residues 169–188 (WDLVVWFRAHSYERELLNVH). A helical membrane pass occupies residues 189 to 209 (LVCLWALSAAATVALTAFCAF). Topologically, residues 210–325 (NIYLVCKNET…TRFNSKRAVQ (116 aa)) are cytoplasmic.

Belongs to the DHHC palmitoyltransferase family. PFA3 subfamily. Post-translationally, autopalmitoylated.

The protein localises to the vacuole membrane. The enzyme catalyses L-cysteinyl-[protein] + hexadecanoyl-CoA = S-hexadecanoyl-L-cysteinyl-[protein] + CoA. Its function is as follows. Palmitoyltransferase specific for VAC8. Palmitoylates VAC8 at one or more of its N-terminal cysteine residues, which is required for its proper membrane localization. The chain is Palmitoyltransferase PFA3 (PFA3) from Eremothecium gossypii (strain ATCC 10895 / CBS 109.51 / FGSC 9923 / NRRL Y-1056) (Yeast).